Reading from the N-terminus, the 264-residue chain is 5'-nucleotidase SurE (264 aa).

Positions 10, 11, 43, and 99 each coordinate a divalent metal cation.

Belongs to the SurE nucleotidase family. A divalent metal cation serves as cofactor.

Its subcellular location is the cytoplasm. The enzyme catalyses a ribonucleoside 5'-phosphate + H2O = a ribonucleoside + phosphate. In terms of biological role, nucleotidase that shows phosphatase activity on nucleoside 5'-monophosphates. In Methanococcus vannielii (strain ATCC 35089 / DSM 1224 / JCM 13029 / OCM 148 / SB), this protein is 5'-nucleotidase SurE.